The sequence spans 315 residues: Homoserine kinase (315 aa).

97–107 (PPARGLGSSAT) provides a ligand contact to ATP.

This sequence belongs to the GHMP kinase family. Homoserine kinase subfamily.

The protein localises to the cytoplasm. It carries out the reaction L-homoserine + ATP = O-phospho-L-homoserine + ADP + H(+). Its pathway is amino-acid biosynthesis; L-threonine biosynthesis; L-threonine from L-aspartate: step 4/5. Catalyzes the ATP-dependent phosphorylation of L-homoserine to L-homoserine phosphate. The sequence is that of Homoserine kinase from Synechococcus sp. (strain CC9605).